The chain runs to 871 residues: Protein argonaute-2 (871 aa).

One can recognise a PAZ domain in the interval Pro232–Ala351. Interaction with guide RNA stretches follow at residues Tyr314 to His319 and Gly536 to Lys578. Positions Leu529 to Val830 constitute a Piwi domain. The segment at Phe599–Pro602 is interaction with GW182 family members. Asp609 serves as a coordination point for a divalent metal cation. The interval Leu662–Lys672 is interaction with GW182 family members. Residue Asp681 coordinates a divalent metal cation. Interaction with guide RNA regions lie at residues Lys721–Arg722, His765–Arg773, and Tyr802–Arg824. Residue His819 participates in a divalent metal cation binding. Positions His834–Lys856 are disordered. The segment covering Gly839–Asp850 has biased composition (polar residues).

This sequence belongs to the argonaute family. Ago subfamily. In terms of assembly, component of the RISC loading complex (RLC), or micro-RNA (miRNA) loading complex (miRLC), which is composed of dicer1, ago2 and tarbp2. Note that the trimeric RLC/miRLC is also referred to as RISC. The cofactor is Mg(2+). Mn(2+) serves as cofactor.

Its subcellular location is the cytoplasm. The protein resides in the P-body. The catalysed reaction is Endonucleolytic cleavage to 5'-phosphomonoester.. Its function is as follows. Required for RNA-mediated gene silencing (RNAi) by the RNA-induced silencing complex (RISC). The 'minimal RISC' appears to include ago2 bound to a short guide RNA such as a microRNA (miRNA) or short interfering RNA (siRNA). These guide RNAs direct RISC to complementary mRNAs that are targets for RISC-mediated gene silencing. The precise mechanism of gene silencing depends on the degree of complementarity between the miRNA or siRNA and its target. Binding of RISC to a perfectly complementary mRNA generally results in silencing due to endonucleolytic cleavage of the mRNA specifically by ago2. Binding of RISC to a partially complementary mRNA results in silencing through inhibition of translation, and this is independent of endonuclease activity. The inhibition of translational initiation leads to the accumulation of the affected mRNA in cytoplasmic processing bodies (P-bodies), where mRNA degradation may subsequently occur. This Xenopus tropicalis (Western clawed frog) protein is Protein argonaute-2 (ago2).